Reading from the N-terminus, the 592-residue chain is Aspartate--tRNA(Asp/Asn) ligase (592 aa).

Glutamate 175 is a binding site for L-aspartate. The tract at residues 199–202 (QLFK) is aspartate. Arginine 221 provides a ligand contact to L-aspartate. Residues 221–223 (RDE) and glutamine 230 each bind ATP. Histidine 450 is an L-aspartate binding site. Glutamate 483 contacts ATP. L-aspartate is bound at residue arginine 490. 535–538 (GLDR) is an ATP binding site.

It belongs to the class-II aminoacyl-tRNA synthetase family. Type 1 subfamily. Homodimer.

The protein localises to the cytoplasm. It catalyses the reaction tRNA(Asx) + L-aspartate + ATP = L-aspartyl-tRNA(Asx) + AMP + diphosphate. In terms of biological role, aspartyl-tRNA synthetase with relaxed tRNA specificity since it is able to aspartylate not only its cognate tRNA(Asp) but also tRNA(Asn). Reaction proceeds in two steps: L-aspartate is first activated by ATP to form Asp-AMP and then transferred to the acceptor end of tRNA(Asp/Asn). The sequence is that of Aspartate--tRNA(Asp/Asn) ligase from Acinetobacter baumannii (strain ATCC 17978 / DSM 105126 / CIP 53.77 / LMG 1025 / NCDC KC755 / 5377).